Reading from the N-terminus, the 110-residue chain is UPF0122 protein SE_0911 (110 aa).

Belongs to the UPF0122 family.

Its function is as follows. Might take part in the signal recognition particle (SRP) pathway. This is inferred from the conservation of its genetic proximity to ftsY/ffh. May be a regulatory protein. This Staphylococcus epidermidis (strain ATCC 12228 / FDA PCI 1200) protein is UPF0122 protein SE_0911.